Consider the following 463-residue polypeptide: Female germline-specific tumor suppressor gld-1 (463 aa).

Polar residues predominate over residues 1–10; sequence MPSCTTPTYG. Positions 1–76 are disordered; it reads MPSCTTPTYG…RAPPPARLTL (76 aa). Residues 11 to 31 are compositionally biased toward low complexity; that stretch reads VSTQLESQSSESPSRSSVMTP. The tract at residues 135-205 is qua1 domain; involved in homodimerization; that stretch reads PTATEPIEVE…PEPAGDMISI (71 aa). Residues 208–260 enclose the KH domain; sequence KIYVPKNEYPDYNFVGRILGPRGMTAKQLEQDTGCKIMVRGKGSMRDKSKESA. The segment at 305–336 is qua2 domain; involved in RNA binding; the sequence is APEGTDELKRKQLMELAIINGTYRPMKSPNPA. Residues 443-463 form a disordered region; that stretch reads NTNVSPSGASPSASSVNNTSF. Residues 447-457 are compositionally biased toward low complexity; the sequence is SPSGASPSASS.

In terms of assembly, homodimer. In terms of processing, phosphorylated by cdk-2 which may negatively regulate its expression in distal mitotic germline cells. Undergoes proteasomal degradation in proximal oocytes following mating. As to expression, expressed in proximal and distal oocytes in female worms but is eliminated from proximal oocytes following mating.

Its function is as follows. RNA-binding protein which recognizes the 5'-UACUCAU-3' RNA consensus sequence. Binds sequences in both the 5'coding and the 3'-UTR region of rme-2 mRNA. Binds sequences in the 3'-UTR region of cye-1 mRNA. Binds to cyb-2.1, cyb-2.2 and cyb-3 mRNA. Binds sequences in the 3'-UTR region of tra-2 mRNA. Binds to the 3' UTR of Notch receptor homolog glp-1, thereby repressing glp-1 translation in the embryo. Binding to the glp-1 3' UTR is inhibited by pos-1 binding to an overlapping binding site in the glp-1 3' UTR. Germ line-specific tumor suppressor essential for oogenesis. Controls the spatial pattern of translation of multiple oogenesis specific mRNAs (e.g. yolk receptor rme-2) by repression of translation during early meiotic prophase (leptotene to pachytene) and then derepression of translation during diplotene/ diakinesis, following its degradation. Also functions to promote the male sexual fate in the hermaphrodite germline but not the male germline. Represses translation of the vacuolar ATPase component vha-13 in the distal gonad. Functions redundantly with gld-2 to promote the initiation of meiotic development and/or inhibit stem cell proliferation. By regulating cye-1 expression, prevents entry into mitosis in meiotic germline cells. This is Female germline-specific tumor suppressor gld-1 (gld-1) from Caenorhabditis elegans.